Reading from the N-terminus, the 210-residue chain is Large ribosomal subunit protein uL4 (210 aa).

The segment covering 41–52 has biased composition (polar residues); sequence QTNARQGTASTK. Residues 41–71 form a disordered region; sequence QTNARQGTASTKTRAEVRGGGRKPWRQKGTG. The segment covering 60–71 has biased composition (basic residues); the sequence is GGRKPWRQKGTG.

The protein belongs to the universal ribosomal protein uL4 family. Part of the 50S ribosomal subunit.

In terms of biological role, one of the primary rRNA binding proteins, this protein initially binds near the 5'-end of the 23S rRNA. It is important during the early stages of 50S assembly. It makes multiple contacts with different domains of the 23S rRNA in the assembled 50S subunit and ribosome. Functionally, forms part of the polypeptide exit tunnel. In Trichormus variabilis (strain ATCC 29413 / PCC 7937) (Anabaena variabilis), this protein is Large ribosomal subunit protein uL4.